Here is a 525-residue protein sequence, read N- to C-terminus: DNA damage-binding protein CMR1 (525 aa).

2 disordered regions span residues 38–86 (AGIF…AESE) and 212–233 (GILD…EYPD). Basic residues predominate over residues 53–62 (TKKKPAPKRV). WD repeat units lie at residues 183 to 224 (ITRE…DQNE), 241 to 281 (PHTN…ATEA), 288 to 328 (SDDE…KANP), 339 to 379 (LSEK…TKHP), 384 to 425 (EHES…KDWK), 448 to 491 (GKWV…LAQL), and 494 to 525 (DVIT…CLWM). Residues 223–232 (NESDEEDEYP) show a composition bias toward acidic residues.

Belongs to the WD repeat DDB2/WDR76 family.

DNA-binding protein that binds to both single- and double-stranded DNA. Binds preferentially to UV-damaged DNA. May be involved in DNA-metabolic processes. The chain is DNA damage-binding protein CMR1 from Coccidioides immitis (strain RS) (Valley fever fungus).